Reading from the N-terminus, the 350-residue chain is MPVLHNRISNDALKAKMLAESEPRTTISFYKYFHIADPKATRDALYQLFTALNVFGRVYLAHEGINAQISVPASNVETFRAQLYAFDSALDGLRLNIALDDDGKSFWVLRMKVRDRIVADGIDDPHFDASNVGEYLQAAEVNAMLDDPDALFIDMRNHYEYEVGHFENALEIPADTFREQLPKAVEMMQAHKDKKIVMYCTGGIRCEKASAWMKHNGFNKVWHIEGGIIEYARKAREQGLPVRFIGKNFVFDERMGERISDEIIAHCHQCGAPCDSHTNCKNDGCHLLFIQCPVCAEKYKGCCSEICCEESALPPEEQRRRRAGRENGNKIFNKSRGRLNTTLGIPDPTE.

The region spanning 146-240 (DDPDALFIDM…YARKAREQGL (95 aa)) is the Rhodanese domain. Cysteine 200 (cysteine persulfide intermediate) is an active-site residue.

The protein belongs to the TrhO family.

It catalyses the reaction uridine(34) in tRNA + AH2 + O2 = 5-hydroxyuridine(34) in tRNA + A + H2O. Its function is as follows. Catalyzes oxygen-dependent 5-hydroxyuridine (ho5U) modification at position 34 in tRNAs, the first step in 5-carboxymethoxyuridine (cmo5U) biosynthesis. May be part of an alternate pathway, which is able to bypass cmo5U biogenesis in a subset of tRNAs under aerobic conditions. This is tRNA uridine(34) hydroxylase from Escherichia coli O9:H4 (strain HS).